The sequence spans 43 residues: Potassium channel toxin gamma-KTx 4.12 (43 aa).

Intrachain disulfides connect Cys5–Cys23, Cys11–Cys34, Cys20–Cys39, and Cys24–Cys41.

In terms of tissue distribution, expressed by the venom gland.

The protein localises to the secreted. Functionally, reversibly blocks Kv11/ERG potassium channels. Is less toxic than ergtoxin (AC Q86QT3). The sequence is that of Potassium channel toxin gamma-KTx 4.12 from Centruroides sculpturatus (Arizona bark scorpion).